The sequence spans 503 residues: Probable apyrase 4 (503 aa).

Low complexity predominate over residues 1–14; that stretch reads MQRSNARSRSNINS. The disordered stretch occupies residues 1-39; the sequence is MQRSNARSRSNINSDMVDPPEVQTSPGNHRSSPSTAAKP. The Cytoplasmic portion of the chain corresponds to 1-45; it reads MQRSNARSRSNINSDMVDPPEVQTSPGNHRSSPSTAAKPKSKRTK. A helical; Signal-anchor for type II membrane protein transmembrane segment spans residues 46–66; that stretch reads SIIFVIVACVTIALGLLFIGY. At 67–503 the chain is on the extracellular side; sequence SILRSGRNRR…DLSNVAKYKI (437 aa). An ATP-binding site is contributed by 83 to 93; sequence VIIDGGSSGTR. Glutamate 206 (proton acceptor) is an active-site residue. 230–240 is a binding site for ATP; it reads GIVELGGASAQ. N-linked (GlcNAc...) asparagine glycans are attached at residues asparagine 261, asparagine 293, and asparagine 338.

Belongs to the GDA1/CD39 NTPase family. Ca(2+) serves as cofactor. In terms of tissue distribution, expressed both in the primary root and lateral root but not in the rosette leaves.

It localises to the membrane. It carries out the reaction a ribonucleoside 5'-triphosphate + 2 H2O = a ribonucleoside 5'-phosphate + 2 phosphate + 2 H(+). In terms of biological role, catalyzes the hydrolysis of phosphoanhydride bonds of nucleoside tri- and di-phosphates. This chain is Probable apyrase 4 (APY4), found in Arabidopsis thaliana (Mouse-ear cress).